The primary structure comprises 481 residues: RAC-alpha serine/threonine-protein kinase (481 aa).

Residues 5–108 enclose the PH domain; sequence AIVKEGWLHK…WIQVIQHVAD (104 aa). The tract at residues 120 to 141 is disordered; the sequence is VRSGDSPSDNSGAEEMEVSHSK. O-linked (GlcNAc) serine glycans are attached at residues Ser-127 and Ser-130. The region spanning 151 to 409 is the Protein kinase domain; it reads FEYLKLLGKG…AKEIMQHKFF (259 aa). ATP-binding positions include 157–165 and Lys-180; that span reads LGKGTFGKV. The active-site Proton acceptor is Asp-275. The O-linked (GlcNAc) threonine glycan is linked to Thr-306. Thr-309 is modified (phosphothreonine; by PDPK1). Residue Thr-313 is glycosylated (O-linked (GlcNAc) threonine). In terms of domain architecture, AGC-kinase C-terminal spans 410-481; it reads AGIVWQDVYE…QFSYSASGNA (72 aa). Residue Ser-474 is modified to Phosphoserine. O-linked (GlcNAc) serine; alternate glycosylation is present at Ser-474. Tyr-475 carries the phosphotyrosine modification.

The protein belongs to the protein kinase superfamily. AGC Ser/Thr protein kinase family. RAC subfamily. Post-translationally, cleavage by caspase-3/CASP3. Cleaved at the caspase-3 consensus site Asp-463 during apoptosis, resulting in down-regulation of the AKT signaling pathway and decreased cell survival. In terms of processing, phosphorylation on Thr-309 and Ser-474 is required for full activity. Phosphorylation of the activation loop at Thr-309 by PDPK1/PDK1 is a prerequisite for full activation. Phosphorylation by mTORC2 at Ser-474 in response to growth factors plays a key role in AKT1 activation by facilitating subsequent phosphorylation of the activation loop by PDPK1/PDK1. In terms of tissue distribution, expressed in the oocyte.

The protein resides in the cytoplasm. The protein localises to the nucleus. It catalyses the reaction L-seryl-[protein] + ATP = O-phospho-L-seryl-[protein] + ADP + H(+). It carries out the reaction L-threonyl-[protein] + ATP = O-phospho-L-threonyl-[protein] + ADP + H(+). With respect to regulation, activated in response to insulin. Three specific sites, one in the kinase domain (Thr-309) and the two other ones in the C-terminal regulatory region (Ser-474 and Tyr-475), need to be phosphorylated for its full activation. Its function is as follows. AKT1 is one of several closely related serine/threonine-protein kinases known as the AKT kinase, and which regulate many processes including metabolism, proliferation, cell survival, growth and angiogenesis. This is mediated through serine and/or threonine phosphorylation of a range of downstream substrates. Over 100 substrate candidates have been reported so far, but for most of them, no isoform specificity has been reported. Signals downstream of phosphatidylinositol 3-kinase (PI(3)K) to mediate the effects of various growth factors such as platelet-derived growth factor (PDGF), epidermal growth factor (EGF), insulin and insulin-like growth factor 1 (IGF1). Plays a role as a key modulator of the AKT-mTOR signaling pathway controlling the tempo of the process of newborn neurons integration during adult neurogenesis, including correct neuron positioning, dendritic development and synapse formation. Plays a role in glucose transport by mediating insulin-induced translocation of the GLUT4 glucose transporter to the cell surface. Mediates the antiapoptotic effects of IGF1. Mediates insulin-stimulated protein synthesis, partly by playing a role in both insulin-induced phosphorylation of 4E-BP1 and in insulin-induced activation of p70 S6 kinase. Promotes glycogen synthesis by mediating the insulin-induced activation of glycogen synthase. Required for insulin-stimulated meiotic reinitiation during oocyte maturation. May be involved in the regulation of vesicular functions such as preciliary trafficking and endocytic recycling. The protein is RAC-alpha serine/threonine-protein kinase of Xenopus laevis (African clawed frog).